The chain runs to 240 residues: Carboxy-S-adenosyl-L-methionine synthase (240 aa).

Residues Tyr-35, 61-63 (GCS), 86-87 (DN), 112-113 (DI), and Arg-194 each bind S-adenosyl-L-methionine.

The protein belongs to the class I-like SAM-binding methyltransferase superfamily. Cx-SAM synthase family. Homodimer.

It catalyses the reaction prephenate + S-adenosyl-L-methionine = carboxy-S-adenosyl-L-methionine + 3-phenylpyruvate + H2O. Catalyzes the conversion of S-adenosyl-L-methionine (SAM) to carboxy-S-adenosyl-L-methionine (Cx-SAM). The chain is Carboxy-S-adenosyl-L-methionine synthase from Wolinella succinogenes (strain ATCC 29543 / DSM 1740 / CCUG 13145 / JCM 31913 / LMG 7466 / NCTC 11488 / FDC 602W) (Vibrio succinogenes).